We begin with the raw amino-acid sequence, 590 residues long: Nuclear receptor subfamily 2 group C member 1 (590 aa).

The tract at residues 1-166 (MATIEEIAHQ…RLQRCIAFGM (166 aa)) is required for interaction with KAT2B. A DNA-binding region (nuclear receptor) is located at residues 98–173 (FDLCVVCGDK…FGMKQDSVQC (76 aa)). NR C4-type zinc fingers lie at residues 101–121 (CVVCGDKASGRHYGAITCEGC) and 137–156 (CRGSKDCIINKHHRNRCQYC). Phosphoserine occurs at positions 185 and 203. The residue at position 208 (Thr-208) is a Phosphothreonine. At Thr-210 the chain carries Phosphothreonine; by MAPK1. A Glycyl lysine isopeptide (Lys-Gly) (interchain with G-Cter in SUMO); alternate cross-link involves residue Lys-238. A Glycyl lysine isopeptide (Lys-Gly) (interchain with G-Cter in SUMO2); alternate cross-link involves residue Lys-238. One can recognise an NR LBD domain in the interval 333–577 (ESMEGSTHLI…SVIPHILKME (245 aa)). Position 568 is a phosphoserine; by PKC (Ser-568). A required for interaction with NRIP1 region spans residues 571-590 (PHILKMEPADYNSQIIGHSL). Lys-575 is covalently cross-linked (Glycyl lysine isopeptide (Lys-Gly) (interchain with G-Cter in SUMO2)).

This sequence belongs to the nuclear hormone receptor family. NR2 subfamily. In terms of assembly, homodimer. Heterodimer; with NR2C2 which is required for chromatin remodeling and for binding to promoter regions such as globin DR1 repeats. Interacts with ESR1; the interaction prevents homodimerization of ESR1 and suppresses its transcriptional activity and cell growth. Interacts with NRIP1 (via its LXXLL motifs); the interaction provides corepressor activity. Interacts with HDAC3 (via the DNA-binding domain); the interaction recruits phosphorylated NR2C1 to PML bodies for sumoylation. Interacts with HDAC4 (via the DNA-binding domain). Interacts with PIAS1; the interaction is required for sumoylation of NR2C1. Interacts with UBE2I; the interaction is required for sumoylation of NR2C1. Interacts with KAT2B; the interaction acts as a corepressor of gene expression. Post-translationally, sumoylation requires both PIAS1 and UBE2I. Sumoylation appears to dissociate NR2C1 from the PML nuclear bodies. Enhances the interaction with NRIP1 but inhibits interaction with KAT2B. In proliferating cells, stimulation by all-trans retinoic acid, activation of MAPK1-mediated phosphorylation and recruitment to PML bodies with subsequent sumoylation, suppresses OCT4 expression. In terms of processing, phosphorylated on several serine and threonine residues. Phosphorylation on Thr-210, stimulated by all-trans retinoic acid (atRA) mediates PML location and sumoylation in proliferating cells which then modulates its association with effector molecules, KAT2B and NRIP1. Phosphorylation on Ser-568 by PKC is important for protein stability and function as activator of RARB.

Its subcellular location is the nucleus. It is found in the PML body. Its function is as follows. Orphan nuclear receptor. Binds the IR7 element in the promoter of its own gene in an autoregulatory negative feedback mechanism. Primarily repressor of a broad range of genes including ESR1 and RARB. Together with NR2C2, forms the core of the DRED (direct repeat erythroid-definitive) complex that represses embryonic and fetal globin transcription. Binds to hormone response elements (HREs) consisting of two 5'-AGGTCA-3' half site direct repeat consensus sequences. Also activator of OCT4 gene expression. Plays a fundamental role in early embryogenesis and regulates embryonic stem cell proliferation and differentiation. Mediator of retinoic acid-regulated preadipocyte proliferation. This chain is Nuclear receptor subfamily 2 group C member 1 (Nr2c1), found in Rattus norvegicus (Rat).